A 146-amino-acid polypeptide reads, in one-letter code: Core protein D2 (146 aa).

This sequence belongs to the orthopoxvirus OPG114 family. In terms of assembly, part of a complex composed of the kinase OPG054, OPG092, OPG100, OPG114, OPG115, OPG142 and OPG157.

It is found in the virion. Late protein which is part of a large complex required for early virion morphogenesis. This complex participates in the formation of virosomes and the incorporation of virosomal contents into nascent immature virions. The chain is Core protein D2 (OPG114) from Vaccinia virus (strain Copenhagen) (VACV).